The following is a 230-amino-acid chain: Large ribosomal subunit protein uL1 (230 aa).

Belongs to the universal ribosomal protein uL1 family. In terms of assembly, part of the 50S ribosomal subunit.

Functionally, binds directly to 23S rRNA. The L1 stalk is quite mobile in the ribosome, and is involved in E site tRNA release. Its function is as follows. Protein L1 is also a translational repressor protein, it controls the translation of the L11 operon by binding to its mRNA. The polypeptide is Large ribosomal subunit protein uL1 (Leptospira borgpetersenii serovar Hardjo-bovis (strain L550)).